The chain runs to 1070 residues: DNA-directed RNA polymerase subunit beta (1070 aa).

It belongs to the RNA polymerase beta chain family. In terms of assembly, in plastids the minimal PEP RNA polymerase catalytic core is composed of four subunits: alpha, beta, beta', and beta''. When a (nuclear-encoded) sigma factor is associated with the core the holoenzyme is formed, which can initiate transcription.

Its subcellular location is the plastid. It localises to the chloroplast. The enzyme catalyses RNA(n) + a ribonucleoside 5'-triphosphate = RNA(n+1) + diphosphate. Functionally, DNA-dependent RNA polymerase catalyzes the transcription of DNA into RNA using the four ribonucleoside triphosphates as substrates. In Citrus sinensis (Sweet orange), this protein is DNA-directed RNA polymerase subunit beta.